The following is a 156-amino-acid chain: Small ribosomal subunit protein uS7 (156 aa).

It belongs to the universal ribosomal protein uS7 family. As to quaternary structure, part of the 30S ribosomal subunit. Contacts proteins S9 and S11.

Functionally, one of the primary rRNA binding proteins, it binds directly to 16S rRNA where it nucleates assembly of the head domain of the 30S subunit. Is located at the subunit interface close to the decoding center, probably blocks exit of the E-site tRNA. This chain is Small ribosomal subunit protein uS7, found in Gloeobacter violaceus (strain ATCC 29082 / PCC 7421).